Here is a 278-residue protein sequence, read N- to C-terminus: Sulfur carrier protein FdhD (278 aa).

Cysteine 121 functions as the Cysteine persulfide intermediate in the catalytic mechanism. Residue 260–265 coordinates Mo-bis(molybdopterin guanine dinucleotide); sequence FCKPGR.

The protein belongs to the FdhD family.

Its subcellular location is the cytoplasm. In terms of biological role, required for formate dehydrogenase (FDH) activity. Acts as a sulfur carrier protein that transfers sulfur from IscS to the molybdenum cofactor prior to its insertion into FDH. This is Sulfur carrier protein FdhD from Escherichia coli O127:H6 (strain E2348/69 / EPEC).